The sequence spans 370 residues: Protein TEEBE (370 aa).

An N-terminal signal peptide occupies residues 1 to 21; that stretch reads MSLYHSLSIFLLLSLCHGSYS. Asn215 carries N-linked (GlcNAc...) asparagine glycosylation.

As to expression, expressed in primary and lateral roots, stigmatic papillae and hypocotyls.

The protein localises to the secreted. Its subcellular location is the cell wall. Functionally, prevents hypocotyl epidermal cells elongation by modulating the pectin status in cell walls. Likely regulates pectin methylesterification degree during cell separation and elongation, including upon root-knot nematode Meloidogyne incognita infection. This Arabidopsis thaliana (Mouse-ear cress) protein is Protein TEEBE.